The following is a 301-amino-acid chain: MEILMYKRLPPLNSLKSFESAARYLSFTKAADELCVTQAAVSHQIKLLEXFLGIDLFKRKNRSLELTELGKAYFVDINKILRRLNEATERLLTLKTDPHLNISVPQTFGIQWLVPHLSEFNQLYPQIEVRLTGVDQDEGLLNKEIDLAIYYGLGNWQNLQVDRLCEENLLILASPELLAENPIIQPEDLKKHTLIHIHTCDNWQAMANHLQLDDLNIQQGPLFSHTFMALQAAIHGQGIVLANRLLALQEIENGSLQAVLPTNLPDPKSFYVVNHLDRLDDQKIQAFRQWIINSIKQEENE.

The region spanning 10 to 67 is the HTH lysR-type domain; that stretch reads PPLNSLKSFESAARYLSFTKAADELCVTQAAVSHQIKLLEXFLGIDLFKRKNRSLELT. The segment at residues 27 to 46 is a DNA-binding region (H-T-H motif); the sequence is FTKAADELCVTQAAVSHQIK.

Belongs to the LysR transcriptional regulatory family.

Its subcellular location is the cytoplasm. In terms of biological role, not known, the gcv operon regulated by the E.coli homolog does not exist in H.influenzae, so it probably acts as a transcriptional regulator on some other operon. This chain is Glycine cleavage system transcriptional activator homolog (gcvA), found in Haemophilus influenzae (strain ATCC 51907 / DSM 11121 / KW20 / Rd).